A 161-amino-acid polypeptide reads, in one-letter code: Regulator of ribonuclease activity A (161 aa).

This sequence belongs to the RraA family. As to quaternary structure, homotrimer. Binds to both RNA-binding sites in the C-terminal region of Rne and to RhlB.

Its subcellular location is the cytoplasm. Its function is as follows. Globally modulates RNA abundance by binding to RNase E (Rne) and regulating its endonucleolytic activity. Can modulate Rne action in a substrate-dependent manner by altering the composition of the degradosome. Modulates RNA-binding and helicase activities of the degradosome. This is Regulator of ribonuclease activity A from Yersinia enterocolitica serotype O:8 / biotype 1B (strain NCTC 13174 / 8081).